The chain runs to 256 residues: Probable cyclic nucleotide phosphodiesterase Fisuc_1441/FSU_1912 (256 aa).

7 residues coordinate Fe cation: aspartate 20, histidine 22, aspartate 59, asparagine 89, histidine 156, histidine 196, and histidine 198. AMP-binding positions include histidine 22, aspartate 59, and 89–90 (NH). An AMP-binding site is contributed by histidine 198.

This sequence belongs to the cyclic nucleotide phosphodiesterase class-III family. It depends on Fe(2+) as a cofactor.

In Fibrobacter succinogenes (strain ATCC 19169 / S85), this protein is Probable cyclic nucleotide phosphodiesterase Fisuc_1441/FSU_1912.